Here is a 339-residue protein sequence, read N- to C-terminus: Protein pelota homolog (339 aa).

Belongs to the eukaryotic release factor 1 family. Pelota subfamily. Monomer. A divalent metal cation is required as a cofactor.

The protein resides in the cytoplasm. May function in recognizing stalled ribosomes, interact with stem-loop structures in stalled mRNA molecules, and effect endonucleolytic cleavage of the mRNA. May play a role in the release non-functional ribosomes and degradation of damaged mRNAs. Has endoribonuclease activity. This Picrophilus torridus (strain ATCC 700027 / DSM 9790 / JCM 10055 / NBRC 100828 / KAW 2/3) protein is Protein pelota homolog.